The chain runs to 131 residues: D-ribose pyranase (131 aa).

The active-site Proton donor is histidine 20. Residues aspartate 28, histidine 98, and 120 to 122 (YAN) each bind substrate.

This sequence belongs to the RbsD / FucU family. RbsD subfamily. Homodecamer.

The protein localises to the cytoplasm. It carries out the reaction beta-D-ribopyranose = beta-D-ribofuranose. It functions in the pathway carbohydrate metabolism; D-ribose degradation; D-ribose 5-phosphate from beta-D-ribopyranose: step 1/2. In terms of biological role, catalyzes the interconversion of beta-pyran and beta-furan forms of D-ribose. This is D-ribose pyranase from Clostridium novyi (strain NT).